A 464-amino-acid polypeptide reads, in one-letter code: Myrosinase 1 (464 aa).

Substrate is bound at residue Gln-19. Positions 39 and 52 each coordinate Zn(2+). Substrate-binding residues include His-122 and Asn-166. Residue Glu-167 is the Nucleophile of the active site. Glu-374 (proton donor) is an active-site residue. Asn-397 is a glycosylation site (N-linked (GlcNAc...) asparagine).

Homodimer. In terms of tissue distribution, expressed in the skeletal muscle tissues surrounding the head, abdomen and thorax. Not expressed in flight muscles (at protein level).

It carries out the reaction a thioglucoside + H2O = a sugar + a thiol.. Hydrolyzes glucosinolates to a labile aglycone. This rapidly undergoes spontaneous rearrangement, eliminating sulfur to yield a number of toxic metabolites. Thereby developing a chemical defense system that exploits and mimics the host plant. The polypeptide is Myrosinase 1 (Brevicoryne brassicae (Mealy cabbage aphid)).